A 466-amino-acid polypeptide reads, in one-letter code: MPHSWDYDAVVIGSGPGGEGAAMGLVKQGARVAVIERYHNVGGGCTHWGTIPSKALRHAVSRIIEFNHNPLYSDHSRLLRSSFADILNHADNVINQQTRMRQGFYERNHCEILQGNAHFIDEHTLALECHDGTVETLTAEKFVIACGSRPYHPNDVDFSHPRIYDSDSILSLHHEPRHVIIYGAGVIGCEYASIFRGMDVKVDLINTRDRLLAFLDQEMSDSLSYHFWNSGVVIRHNEEYEKIEGCDDGVIMHLKSGKKLKADCLLYANGRTGNTDSLALENIGLETDSRGQLKVNSMYQTALPHVYAVGDVIGYPSLASAAYDQGRIAAQALVKGEATAHLIEDIPTGIYTIPEISSVGKTEQQLTAMKVPYEVGRAQFKHLARAQIVGMNVGTLKILFHRETKEILGIHCFGERAAEIIHIGQAIMEQKGGGNTIEYFVNTTFNYPTMAEAYRVAALNGLNRLF.

36 to 45 (ERYHNVGGGC) is an FAD binding site.

Belongs to the class-I pyridine nucleotide-disulfide oxidoreductase family. Requires FAD as cofactor.

The protein localises to the cytoplasm. It catalyses the reaction NAD(+) + NADPH = NADH + NADP(+). Its function is as follows. Conversion of NADPH, generated by peripheral catabolic pathways, to NADH, which can enter the respiratory chain for energy generation. The protein is Soluble pyridine nucleotide transhydrogenase of Salmonella gallinarum (strain 287/91 / NCTC 13346).